Here is an 877-residue protein sequence, read N- to C-terminus: Alanine--tRNA ligase (877 aa).

Residues His561, His565, Cys669, and His673 each coordinate Zn(2+).

Belongs to the class-II aminoacyl-tRNA synthetase family. Zn(2+) is required as a cofactor.

The protein localises to the cytoplasm. The catalysed reaction is tRNA(Ala) + L-alanine + ATP = L-alanyl-tRNA(Ala) + AMP + diphosphate. Catalyzes the attachment of alanine to tRNA(Ala) in a two-step reaction: alanine is first activated by ATP to form Ala-AMP and then transferred to the acceptor end of tRNA(Ala). Also edits incorrectly charged Ser-tRNA(Ala) and Gly-tRNA(Ala) via its editing domain. The sequence is that of Alanine--tRNA ligase from Endomicrobium trichonymphae.